The sequence spans 53 residues: SDVRNAAVHERQKELVPSKITTCCGYSPGTACPSCMCTNTCKKKNKKPGRRND.

A propeptide spanning residues 1–11 (SDVRNAAVHER) is cleaved from the precursor. Residue Q12 is modified to Pyrrolidone carboxylic acid. E14 carries the post-translational modification 4-carboxyglutamate. S18 carries an O-linked (HexNAc...) serine glycan. A 4-hydroxyproline mark is found at P28, P33, and P48. A Proline amide modification is found at P48. Positions 49–53 (GRRND) are excised as a propeptide.

The protein belongs to the conotoxin A superfamily. Post-translationally, contains 3 disulfide bonds. In terms of tissue distribution, expressed by the venom duct.

It localises to the secreted. In terms of biological role, probable neurotoxin with ion channel inhibitor activity. The polypeptide is Conotoxin Ac4.3b (Conus achatinus (Little frog cone)).